The primary structure comprises 540 residues: Sesquiterpene synthase 15b (540 aa).

Asp292, Asp296, and Glu445 together coordinate Mg(2+). Residues 292-296 (DDIYD) carry the DDXXD motif motif.

Belongs to the terpene synthase family. Tpsa subfamily. The cofactor is Mg(2+). Requires Mn(2+) as cofactor.

The enzyme catalyses (2E,6E)-farnesyl diphosphate = germacrene A + diphosphate. It functions in the pathway secondary metabolite biosynthesis; terpenoid biosynthesis. In terms of biological role, sesquiterpene synthase involved in the biosynthesis of volatile compounds. Mediates the conversion of (2E,6E)-farnesyl diphosphate (FPP) into germacrene A. This chain is Sesquiterpene synthase 15b, found in Solanum habrochaites (Wild tomato).